We begin with the raw amino-acid sequence, 452 residues long: cAMP-dependent protein kinase regulatory subunit (452 aa).

The dimerization and phosphorylation stretch occupies residues 28 to 212; sequence QFCANYFNSK…ELSKTLGSNF (185 aa). A disordered region spans residues 74 to 163; sequence IMTTNKRQPS…APPVPKSKIP (90 aa). Residues 75 to 84 are compositionally biased toward polar residues; it reads MTTNKRQPSF. The segment covering 95–106 has biased composition (basic and acidic residues); that stretch reads SIDHHHDDDPKE. At Ser173 the chain carries Phosphoserine. Residues 213–330 and 333–451 contribute to the a nucleoside 3',5'-cyclic phosphate site; these read LFRQ…FLKD and VLSS…QGSS. Positions 278, 287, 399, and 408 each coordinate 3',5'-cyclic AMP.

Belongs to the cAMP-dependent kinase regulatory chain family. As to quaternary structure, tetramer, composed of 2 regulatory (R) and 2 catalytic (C) subunits. In the presence of cAMP it dissociates into 2 active monomeric C subunits and an R dimer.

This chain is cAMP-dependent protein kinase regulatory subunit (PKAR), found in Debaryomyces hansenii (strain ATCC 36239 / CBS 767 / BCRC 21394 / JCM 1990 / NBRC 0083 / IGC 2968) (Yeast).